The primary structure comprises 134 residues: MSWQAYVDDHLMCDIEGHEDHRLTAAAIVGHDGSVWAQSATFPQFKPEEMNGIMTDFNEPGHLAPTGLHLGGTKYMVIQGEAGAVIRGKKGSGGITIKKTGQALVFGIYEEPVTPGQCNMVVEGLGDYLLEQGL.

A disulfide bridge connects residues Cys13 and Cys118. An Involved in PIP2 interaction motif is present at residues 84–100 (AVIRGKKGSGGITIKKT). Thr114 is subject to Phosphothreonine.

This sequence belongs to the profilin family. In terms of assembly, occurs in many kinds of cells as a complex with monomeric actin in a 1:1 ratio. Post-translationally, phosphorylated by MAP kinases.

It localises to the cytoplasm. The protein resides in the cytoskeleton. Binds to actin and affects the structure of the cytoskeleton. At high concentrations, profilin prevents the polymerization of actin, whereas it enhances it at low concentrations. The chain is Profilin-4 from Olea europaea (Common olive).